The sequence spans 205 residues: Probable GTP-binding protein EngB (205 aa).

Residues 22 to 195 enclose the EngB-type G domain; it reads NLPEVALVGR…LDLLDYFWNG (174 aa). GTP contacts are provided by residues 30 to 37, 57 to 61, 75 to 78, 142 to 145, and 174 to 176; these read GRSNVGKS, GKTQT, DLPG, TKAD, and FSA. Mg(2+) is bound by residues Ser37 and Thr59.

This sequence belongs to the TRAFAC class TrmE-Era-EngA-EngB-Septin-like GTPase superfamily. EngB GTPase family. Mg(2+) serves as cofactor.

In terms of biological role, necessary for normal cell division and for the maintenance of normal septation. This Heliobacterium modesticaldum (strain ATCC 51547 / Ice1) protein is Probable GTP-binding protein EngB.